A 399-amino-acid chain; its full sequence is Elongation factor Tu (399 aa).

Positions 10–209 (KPHVNIGTIG…AVDDYIPTPV (200 aa)) constitute a tr-type G domain. The interval 19 to 26 (GHVDHGKT) is G1. Residue 19-26 (GHVDHGKT) coordinates GTP. T26 provides a ligand contact to Mg(2+). Residues 62 to 66 (GITIN) are G2. Residues 83–86 (DCPG) form a G3 region. GTP is bound by residues 83-87 (DCPGH) and 138-141 (NKCD). Residues 138-141 (NKCD) form a G4 region. A G5 region spans residues 175 to 177 (SAY).

The protein belongs to the TRAFAC class translation factor GTPase superfamily. Classic translation factor GTPase family. EF-Tu/EF-1A subfamily. In terms of assembly, monomer.

Its subcellular location is the cytoplasm. It carries out the reaction GTP + H2O = GDP + phosphate + H(+). GTP hydrolase that promotes the GTP-dependent binding of aminoacyl-tRNA to the A-site of ribosomes during protein biosynthesis. In Bifidobacterium longum subsp. infantis (strain ATCC 15697 / DSM 20088 / JCM 1222 / NCTC 11817 / S12), this protein is Elongation factor Tu.